We begin with the raw amino-acid sequence, 1945 residues long: Rho GTPase-activating protein 21 (1945 aa).

The segment at 26–53 (CEVSKNKDGKDQGEPVSPSEDEPFSWPG) is disordered. The span at 29-38 (SKNKDGKDQG) shows a compositional bias: basic and acidic residues. Phosphoserine occurs at positions 42 and 63. In terms of domain architecture, PDZ spans 56 to 165 (TVMLKRTSQG…TLELSVMPKD (110 aa)). Disordered stretches follow at residues 210–229 (TAQPVETCPPDSLPNKQQTS) and 326–365 (HQTTGSRSLEPSGILLKSGNYSGHSEGISSSRSQAVDSPP). Residues 347–358 (SGHSEGISSSRS) are compositionally biased toward low complexity. Ser-454 carries the post-translational modification Phosphoserine. A compositionally biased stretch (polar residues) spans 499 to 512 (EATATVNSESQIPD). The segment at 499-519 (EATATVNSESQIPDSNGERKQ) is disordered. Arg-549 and Arg-569 each carry omega-N-methylarginine. Disordered stretches follow at residues 573 to 647 (PVSQ…RPVN) and 674 to 702 (EVSSCLPGTSAKTSPQLSENLGTSDLELP). Polar residues predominate over residues 589–600 (SNRNFPTTTGVS). A phosphoserine mark is found at Ser-610 and Ser-619. Residues 674-696 (EVSSCLPGTSAKTSPQLSENLGT) show a composition bias toward polar residues. Position 741 is a phosphothreonine (Thr-741). A phosphoserine mark is found at Ser-851, Ser-856, and Ser-875. Disordered regions lie at residues 852–879 (HDQESVGPPSLDGQHSSKTERSKSYDEG) and 902–921 (ITDSQKSSEDSGSRKGSSSE). Residues 866–879 (HSSKTERSKSYDEG) are compositionally biased toward basic and acidic residues. A Phosphotyrosine modification is found at Tyr-876. Phosphoserine is present on residues Ser-918, Ser-920, Ser-948, Ser-1093, and Ser-1109. The interval 924–1091 (SDAAREGWLQ…AKSEPKTQSP (168 aa)) is interaction with ARF1 and ARF6. The PH domain maps to 925-1034 (DAAREGWLQF…WIKTIQESSN (110 aa)). A disordered region spans residues 1080–1120 (LGAKSEPKTQSPHSPKEESERKLLSKDDTSPPKDKGTWRRG). Positions 1093–1116 (SPKEESERKLLSKDDTSPPKDKGT) are enriched in basic and acidic residues. The Rho-GAP domain occupies 1141–1333 (VRLDDCPPAH…TLIQHHDWFF (193 aa)). 4 disordered regions span residues 1373–1396 (PGDVSDSATSDSAKSKGSWGSGKD), 1412–1632 (SRKR…PVFP), 1649–1794 (ARVS…LGGH), and 1846–1945 (RTSA…ETPP). A compositionally biased stretch (low complexity) spans 1377 to 1395 (SDSATSDSAKSKGSWGSGK). A phosphoserine mark is found at Ser-1412, Ser-1426, and Ser-1427. Composition is skewed to basic and acidic residues over residues 1435 to 1457 (FFKKENTEQSHSEIKEESKRESE) and 1471 to 1488 (SNTKKDSGTTKEEKKIPW). Residue Lys-1438 forms a Glycyl lysine isopeptide (Lys-Gly) (interchain with G-Cter in SUMO) linkage. Residue Thr-1504 is modified to Phosphothreonine. Composition is skewed to low complexity over residues 1531–1556 (SDSGTLLSTSSQASLLRSSTKKSTSP) and 1569–1589 (TTTSDYSTTSSTTYLTSLDSS). Residues 1579-1848 (STTYLTSLDS…WLARERVRTS (270 aa)) form an interaction with CTNNA1 region. The segment covering 1590–1599 (RLSPEVQSVA) has biased composition (polar residues). A compositionally biased stretch (basic and acidic residues) spans 1611–1621 (SELVSEGRPVE). Ser-1656 bears the Phosphoserine mark. Composition is skewed to polar residues over residues 1658-1681 (GSEASCTEGSLTPSLDSRRQQFSS) and 1729-1738 (STGSLLTPSR). Thr-1669 carries the post-translational modification Phosphothreonine. Ser-1729 carries the phosphoserine modification. The span at 1739 to 1757 (SESEKQEATWKTKIADRLK) shows a compositional bias: basic and acidic residues. Positions 1782–1792 (RKNIKRRHTLG) are enriched in basic residues. Polar residues predominate over residues 1871 to 1882 (PISTHSPPSQQP). The span at 1887-1896 (AATSTLASTS) shows a compositional bias: low complexity. Thr-1902 is subject to Phosphothreonine. Ser-1906 carries the phosphoserine modification. Residues 1907–1927 (PDQINRESFQNMSQNASSTAN) show a composition bias toward polar residues. A compositionally biased stretch (basic and acidic residues) spans 1932–1945 (KQSESPDTKAETPP).

In terms of assembly, interacts with CTNNA1. Interacts with GTP-bound ARF1 and probably ARF6. In terms of processing, sumoylated with SUMO2 and SUMO3 in proliferating lymphocytes.

The protein resides in the golgi apparatus membrane. It is found in the cell junction. It localises to the cytoplasmic vesicle membrane. Its subcellular location is the cytoplasm. The protein localises to the cytoskeleton. In terms of biological role, functions as a GTPase-activating protein (GAP) for RHOA and CDC42. Downstream partner of ARF1 which may control Golgi apparatus structure and function. Also required for CTNNA1 recruitment to adherens junctions. The sequence is that of Rho GTPase-activating protein 21 from Mus musculus (Mouse).